A 445-amino-acid chain; its full sequence is Phosphoglucosamine mutase (445 aa).

The Phosphoserine intermediate role is filled by Ser-99. Mg(2+)-binding residues include Ser-99, Asp-242, Asp-244, and Asp-246. Position 99 is a phosphoserine (Ser-99).

It belongs to the phosphohexose mutase family. Mg(2+) is required as a cofactor. Activated by phosphorylation.

The catalysed reaction is alpha-D-glucosamine 1-phosphate = D-glucosamine 6-phosphate. Catalyzes the conversion of glucosamine-6-phosphate to glucosamine-1-phosphate. The sequence is that of Phosphoglucosamine mutase from Campylobacter jejuni (strain RM1221).